The chain runs to 258 residues: Indole-3-glycerol phosphate synthase (258 aa).

The protein belongs to the TrpC family.

The catalysed reaction is 1-(2-carboxyphenylamino)-1-deoxy-D-ribulose 5-phosphate + H(+) = (1S,2R)-1-C-(indol-3-yl)glycerol 3-phosphate + CO2 + H2O. It functions in the pathway amino-acid biosynthesis; L-tryptophan biosynthesis; L-tryptophan from chorismate: step 4/5. This is Indole-3-glycerol phosphate synthase from Campylobacter jejuni subsp. doylei (strain ATCC BAA-1458 / RM4099 / 269.97).